Here is a 368-residue protein sequence, read N- to C-terminus: Phospho-N-acetylmuramoyl-pentapeptide-transferase (368 aa).

The next 9 helical transmembrane spans lie at 30–50 (AAAI…IAYL), 72–92 (LPTM…FLWA), 99–119 (VWLV…DDYL), 135–155 (LIGQ…DPSM), 170–190 (LTIN…TAIS), 201–221 (GLAA…AYLA), 238–258 (GGEV…FLWF), 265–286 (IIMG…ALLI), and 345–365 (KIVI…LMTL).

It belongs to the glycosyltransferase 4 family. MraY subfamily. Requires Mg(2+) as cofactor.

The protein localises to the cell inner membrane. The enzyme catalyses UDP-N-acetyl-alpha-D-muramoyl-L-alanyl-gamma-D-glutamyl-meso-2,6-diaminopimeloyl-D-alanyl-D-alanine + di-trans,octa-cis-undecaprenyl phosphate = di-trans,octa-cis-undecaprenyl diphospho-N-acetyl-alpha-D-muramoyl-L-alanyl-D-glutamyl-meso-2,6-diaminopimeloyl-D-alanyl-D-alanine + UMP. It functions in the pathway cell wall biogenesis; peptidoglycan biosynthesis. Its function is as follows. Catalyzes the initial step of the lipid cycle reactions in the biosynthesis of the cell wall peptidoglycan: transfers peptidoglycan precursor phospho-MurNAc-pentapeptide from UDP-MurNAc-pentapeptide onto the lipid carrier undecaprenyl phosphate, yielding undecaprenyl-pyrophosphoryl-MurNAc-pentapeptide, known as lipid I. In Chlorobium chlorochromatii (strain CaD3), this protein is Phospho-N-acetylmuramoyl-pentapeptide-transferase.